Consider the following 740-residue polypeptide: ABC transporter G family member 1 (740 aa).

The region spanning 82–334 is the ABC transporter domain; it reads LDFRNLFPRR…FTEFGSPIPE (253 aa). Position 127–134 (127–134) interacts with ATP; the sequence is GASGSGKS. Residues 434–644 form the ABC transmembrane type-2 domain; that stretch reads IEIKTLSKRS…PYEAVLQNEF (211 aa). Transmembrane regions (helical) follow at residues 453 to 473, 488 to 508, 529 to 549, 563 to 585, 594 to 614, and 713 to 733; these read LFGI…TVFW, FFAF…PVFL, VLSH…AFAA, GLLF…VTFL, LGYT…GFFI, and LFIT…TLLL.

Belongs to the ABC transporter superfamily. ABCG family. Eye pigment precursor importer (TC 3.A.1.204) subfamily.

Its subcellular location is the membrane. The polypeptide is ABC transporter G family member 1 (ABCG1) (Arabidopsis thaliana (Mouse-ear cress)).